The sequence spans 190 residues: RNA pyrophosphohydrolase (190 aa).

Residues 6 to 149 (GYRPNVGIVL…KRSVYARALC (144 aa)) enclose the Nudix hydrolase domain. The short motif at 38–59 (GGMHSDETPVEAMYRELNEETG) is the Nudix box element.

The protein belongs to the Nudix hydrolase family. RppH subfamily. It depends on a divalent metal cation as a cofactor.

Functionally, accelerates the degradation of transcripts by removing pyrophosphate from the 5'-end of triphosphorylated RNA, leading to a more labile monophosphorylated state that can stimulate subsequent ribonuclease cleavage. This chain is RNA pyrophosphohydrolase, found in Xylella fastidiosa (strain Temecula1 / ATCC 700964).